The chain runs to 253 residues: Blue-light photoreceptor (253 aa).

The 74-residue stretch at 6-79 folds into the PAS domain; that stretch reads KFDVILKALN…AKIRHAINEK (74 aa). Cysteine 56 bears the S-4a-FMN cysteine mark. The 54-residue stretch at 80–133 folds into the PAC domain; that stretch reads STANVLLKNYRKNGTSFMNELTIEPIYDDNDHLYFVGIQKDVTTEHNYQLELEK. In terms of domain architecture, STAS spans 142 to 253; that stretch reads STPIVPIKEN…STIKEALQFY (112 aa).

Post-translationally, FMN binds covalently to cysteine after exposure to blue light and this bond is spontaneously broken in the dark.

In terms of biological role, exhibits the same spectroscopical features and blue-light induced photochemistry as plants phototropins, with the reversible formation of a blue-shifted photoproduct, assigned to an FMN-cysteine thiol adduct. Positive regulator in the activation of the general stress transcription factor sigma-B. This Listeria innocua serovar 6a (strain ATCC BAA-680 / CLIP 11262) protein is Blue-light photoreceptor.